The primary structure comprises 287 residues: Small ribosomal subunit protein uS3 (287 aa).

A KH type-2 domain is found at 38-106; that stretch reads IRRLLATGLE…QVQLNILEVK (69 aa). The segment at 216-287 is disordered; the sequence is AAAPAGADRP…AETTTQNPGS (72 aa). Over residues 238–287 the composition is skewed to low complexity; that stretch reads SGASGTTATSTDAGRAASGTQEAPAAAEAAAGTEAAAGAAAETTTQNPGS.

The protein belongs to the universal ribosomal protein uS3 family. As to quaternary structure, part of the 30S ribosomal subunit. Forms a tight complex with proteins S10 and S14.

In terms of biological role, binds the lower part of the 30S subunit head. Binds mRNA in the 70S ribosome, positioning it for translation. The polypeptide is Small ribosomal subunit protein uS3 (Mycobacterium sp. (strain JLS)).